The primary structure comprises 199 residues: Imidazoleglycerol-phosphate dehydratase (199 aa).

Belongs to the imidazoleglycerol-phosphate dehydratase family.

Its subcellular location is the cytoplasm. It carries out the reaction D-erythro-1-(imidazol-4-yl)glycerol 3-phosphate = 3-(imidazol-4-yl)-2-oxopropyl phosphate + H2O. The protein operates within amino-acid biosynthesis; L-histidine biosynthesis; L-histidine from 5-phospho-alpha-D-ribose 1-diphosphate: step 6/9. In Bifidobacterium longum (strain NCC 2705), this protein is Imidazoleglycerol-phosphate dehydratase.